Here is a 161-residue protein sequence, read N- to C-terminus: Large ribosomal subunit protein bL17 (161 aa).

Positions 126–161 (TAAKKAPKTRRSRKKATASVAEAPTAEAASEEKAAE) are disordered. Basic residues predominate over residues 130–141 (KAPKTRRSRKKA). Positions 142–153 (TASVAEAPTAEA) are enriched in low complexity.

Belongs to the bacterial ribosomal protein bL17 family. In terms of assembly, part of the 50S ribosomal subunit. Contacts protein L32.

The polypeptide is Large ribosomal subunit protein bL17 (Parabacteroides distasonis (strain ATCC 8503 / DSM 20701 / CIP 104284 / JCM 5825 / NCTC 11152)).